A 106-amino-acid polypeptide reads, in one-letter code: Replication restart protein PriB (106 aa).

The SSB domain maps to 4-103; that stretch reads TNRLVLSGTV…LHAEQIEFID (100 aa).

It belongs to the PriB family. As to quaternary structure, homodimer. Interacts with PriA and DnaT. Component of the replication restart primosome. Primosome assembly occurs via a 'hand-off' mechanism. PriA binds to replication forks, subsequently PriB then DnaT bind; DnaT then displaces ssDNA to generate the helicase loading substrate.

In terms of biological role, involved in the restart of stalled replication forks, which reloads the replicative helicase on sites other than the origin of replication; the PriA-PriB pathway is the major replication restart pathway. During primosome assembly it facilitates complex formation between PriA and DnaT on DNA; stabilizes PriA on DNA. Stimulates the DNA unwinding activity of PriA helicase. In Yersinia enterocolitica serotype O:8 / biotype 1B (strain NCTC 13174 / 8081), this protein is Replication restart protein PriB.